The following is a 147-amino-acid chain: Receptor activity-modifying protein 3 (147 aa).

The first 22 residues, 1–22 (MKTPAQRLHLLPLLLLLCGECA), serve as a signal peptide directing secretion. Over 23 to 112 (QVCGCNETGM…CTVDRTHWED (90 aa)) the chain is Extracellular. 4 N-linked (GlcNAc...) asparagine glycosylation sites follow: N28, N57, N70, and N102. Cystine bridges form between C39-C71 and C56-C103. A helical transmembrane segment spans residues 113 to 137 (PPDEVLIPLIAVPVVLTVAMAGLVV). Residues 138-147 (WRSKHTDRLL) lie on the Cytoplasmic side of the membrane.

The protein belongs to the RAMP family. Heterodimer of CALCRL and RAMP3; interaction induces allosteric modulation of CALCRL function and ligand specificity for adrenomedullin/ADM and intermedin/ADM2. Heterodimer of CALCR and RAMP3; interaction form the receptor complex AMYR3 for amylin/IAPP. Interacts with GPER1. In terms of tissue distribution, expressed predominantly in the testis, embryonic and adult brain and in kidney.

It localises to the cell membrane. The protein localises to the membrane. Its function is as follows. Accessory protein that interacts with and modulates the function of G-protein coupled receptors including calcitonin gene-related peptide type 1 receptor (CALCRL), calcitonin receptor (CALCR) and G-protein coupled estrogen receptor 1 (GPER1). Required for the transport of CALCRL and GPER1 receptors to the plasma membrane. Plays a role in cardioprotection by reducing cardiac hypertrophy and perivascular fibrosis in a GPER1-dependent manner. Together with CALCRL, form a receptor complex for adrenomedullin/ADM and intermedin/ADM2. Together with CALCR, act as a receptor complex for amylin/IAPP. This Mus musculus (Mouse) protein is Receptor activity-modifying protein 3.